The chain runs to 200 residues: 3-isopropylmalate dehydratase small subunit (200 aa).

The protein belongs to the LeuD family. LeuD type 1 subfamily. In terms of assembly, heterodimer of LeuC and LeuD.

It carries out the reaction (2R,3S)-3-isopropylmalate = (2S)-2-isopropylmalate. It functions in the pathway amino-acid biosynthesis; L-leucine biosynthesis; L-leucine from 3-methyl-2-oxobutanoate: step 2/4. In terms of biological role, catalyzes the isomerization between 2-isopropylmalate and 3-isopropylmalate, via the formation of 2-isopropylmaleate. This chain is 3-isopropylmalate dehydratase small subunit, found in Pseudarthrobacter chlorophenolicus (strain ATCC 700700 / DSM 12829 / CIP 107037 / JCM 12360 / KCTC 9906 / NCIMB 13794 / A6) (Arthrobacter chlorophenolicus).